Consider the following 307-residue polypeptide: UDP-N-acetylenolpyruvoylglucosamine reductase (307 aa).

Residues 33–197 form the FAD-binding PCMH-type domain; the sequence is TGGNADFYIT…LEAAFTLAPG (165 aa). The active site involves R176. The active-site Proton donor is S226. The active site involves E296.

Belongs to the MurB family. The cofactor is FAD.

The protein resides in the cytoplasm. The catalysed reaction is UDP-N-acetyl-alpha-D-muramate + NADP(+) = UDP-N-acetyl-3-O-(1-carboxyvinyl)-alpha-D-glucosamine + NADPH + H(+). It functions in the pathway cell wall biogenesis; peptidoglycan biosynthesis. In terms of biological role, cell wall formation. In Staphylococcus aureus (strain MRSA252), this protein is UDP-N-acetylenolpyruvoylglucosamine reductase.